Consider the following 70-residue polypeptide: UPF0337 protein BT9727_3385 (70 aa).

The protein belongs to the UPF0337 (CsbD) family.

This is UPF0337 protein BT9727_3385 from Bacillus thuringiensis subsp. konkukian (strain 97-27).